We begin with the raw amino-acid sequence, 383 residues long: Photosynthetic reaction center cytochrome c subunit (383 aa).

The first 22 residues, 1-22, serve as a signal peptide directing secretion; sequence MNLGKQLTLPAVAVVASVVLLG. Cys-23 carries the N-palmitoyl cysteine lipid modification. Cys-23 carries S-diacylglycerol cysteine lipidation. Positions 94, 107, 110, 111, 130, 144, 152, 155, 156, 236, 247, 250, 251, 307, 310, and 311 each coordinate heme. The disordered stretch occupies residues 335–383; sequence PAEAAPATEEAPAAEAEAVEAAPVEEAAPAPVEQAAAPVEDAAPAPQQL.

In terms of assembly, component of the photosynthetic reaction center composed of protein subunits L (PufL), M (PufM), H (PuhA) and cytochrome C (PufC). The reaction center interacts with light-harvesting antenna complex LH1. In terms of processing, binds 4 heme groups per subunit.

The protein resides in the cellular chromatophore membrane. Its function is as follows. The reaction center of purple bacteria contains a tightly bound cytochrome molecule which re-reduces the photo oxidized primary electron donor. The polypeptide is Photosynthetic reaction center cytochrome c subunit (pufC) (Allochromatium vinosum (strain ATCC 17899 / DSM 180 / NBRC 103801 / NCIMB 10441 / D) (Chromatium vinosum)).